The chain runs to 187 residues: UPF0301 protein ECA3925 (187 aa).

It belongs to the UPF0301 (AlgH) family.

The protein is UPF0301 protein ECA3925 of Pectobacterium atrosepticum (strain SCRI 1043 / ATCC BAA-672) (Erwinia carotovora subsp. atroseptica).